A 332-amino-acid polypeptide reads, in one-letter code: Glycerol-3-phosphate dehydrogenase [NAD(P)+] (332 aa).

NADPH-binding residues include Trp-13, Lys-34, and Lys-108. Sn-glycerol 3-phosphate-binding residues include Lys-108, Gly-136, and Ser-138. Residue Ala-140 participates in NADPH binding. Positions 191, 244, 254, 255, and 256 each coordinate sn-glycerol 3-phosphate. Lys-191 functions as the Proton acceptor in the catalytic mechanism. Arg-255 contacts NADPH. Residues Val-279 and Glu-281 each coordinate NADPH.

This sequence belongs to the NAD-dependent glycerol-3-phosphate dehydrogenase family.

The protein localises to the cytoplasm. It catalyses the reaction sn-glycerol 3-phosphate + NAD(+) = dihydroxyacetone phosphate + NADH + H(+). The catalysed reaction is sn-glycerol 3-phosphate + NADP(+) = dihydroxyacetone phosphate + NADPH + H(+). It functions in the pathway membrane lipid metabolism; glycerophospholipid metabolism. Catalyzes the reduction of the glycolytic intermediate dihydroxyacetone phosphate (DHAP) to sn-glycerol 3-phosphate (G3P), the key precursor for phospholipid synthesis. The protein is Glycerol-3-phosphate dehydrogenase [NAD(P)+] of Francisella philomiragia subsp. philomiragia (strain ATCC 25017 / CCUG 19701 / FSC 153 / O#319-036).